We begin with the raw amino-acid sequence, 554 residues long: Undecaprenyl phosphate-alpha-4-amino-4-deoxy-L-arabinose arabinosyl transferase (554 aa).

The next 11 membrane-spanning stretches (helical) occupy residues Leu-4 to Ile-24, Phe-87 to Leu-107, Phe-115 to Val-135, Phe-178 to Ile-198, Leu-206 to Leu-226, Tyr-262 to Leu-282, Glu-293 to Gly-313, Leu-315 to Thr-335, Ile-352 to Val-372, Gln-384 to Met-404, and His-410 to Pro-430.

The protein belongs to the glycosyltransferase 83 family.

Its subcellular location is the cell inner membrane. The enzyme catalyses 4-amino-4-deoxy-alpha-L-arabinopyranosyl di-trans,octa-cis-undecaprenyl phosphate + lipid IVA = lipid IIA + di-trans,octa-cis-undecaprenyl phosphate.. It participates in lipopolysaccharide metabolism; 4-amino-4-deoxy-beta-L-arabinose-lipid A biosynthesis. Catalyzes the transfer of the L-Ara4N moiety of the glycolipid undecaprenyl phosphate-alpha-L-Ara4N to lipid A. The modified arabinose is attached to lipid A and is required for resistance to polymyxin and cationic antimicrobial peptides. The chain is Undecaprenyl phosphate-alpha-4-amino-4-deoxy-L-arabinose arabinosyl transferase from Yersinia enterocolitica serotype O:8 / biotype 1B (strain NCTC 13174 / 8081).